Consider the following 252-residue polypeptide: Trans-aconitate 2-methyltransferase (252 aa).

This sequence belongs to the methyltransferase superfamily. Tam family.

It localises to the cytoplasm. The enzyme catalyses trans-aconitate + S-adenosyl-L-methionine = (E)-3-(methoxycarbonyl)pent-2-enedioate + S-adenosyl-L-homocysteine. Catalyzes the S-adenosylmethionine monomethyl esterification of trans-aconitate. The sequence is that of Trans-aconitate 2-methyltransferase from Escherichia coli O6:H1 (strain CFT073 / ATCC 700928 / UPEC).